The sequence spans 365 residues: UDP-N-acetylglucosamine--N-acetylmuramyl-(pentapeptide) pyrophosphoryl-undecaprenol N-acetylglucosamine transferase (365 aa).

Residues threonine 10 to glycine 12, asparagine 124, arginine 161, serine 195, isoleucine 248, and glutamine 292 contribute to the UDP-N-acetyl-alpha-D-glucosamine site.

Belongs to the glycosyltransferase 28 family. MurG subfamily.

The protein resides in the cell membrane. The enzyme catalyses di-trans,octa-cis-undecaprenyl diphospho-N-acetyl-alpha-D-muramoyl-L-alanyl-D-glutamyl-meso-2,6-diaminopimeloyl-D-alanyl-D-alanine + UDP-N-acetyl-alpha-D-glucosamine = di-trans,octa-cis-undecaprenyl diphospho-[N-acetyl-alpha-D-glucosaminyl-(1-&gt;4)]-N-acetyl-alpha-D-muramoyl-L-alanyl-D-glutamyl-meso-2,6-diaminopimeloyl-D-alanyl-D-alanine + UDP + H(+). Its pathway is cell wall biogenesis; peptidoglycan biosynthesis. Its function is as follows. Cell wall formation. Catalyzes the transfer of a GlcNAc subunit on undecaprenyl-pyrophosphoryl-MurNAc-pentapeptide (lipid intermediate I) to form undecaprenyl-pyrophosphoryl-MurNAc-(pentapeptide)GlcNAc (lipid intermediate II). This chain is UDP-N-acetylglucosamine--N-acetylmuramyl-(pentapeptide) pyrophosphoryl-undecaprenol N-acetylglucosamine transferase, found in Nocardioides sp. (strain ATCC BAA-499 / JS614).